A 448-amino-acid chain; its full sequence is tRNA modification GTPase MnmE (448 aa).

(6S)-5-formyl-5,6,7,8-tetrahydrofolate is bound by residues R24, E81, and K120. One can recognise a TrmE-type G domain in the interval 216–373 (GLNVVLVGAP…LKRTLLREAG (158 aa)). Residue N226 coordinates K(+). Residues 226–231 (NVGKSS), 245–251 (TDIAGTT), and 270–273 (DTAG) each bind GTP. S230 provides a ligand contact to Mg(2+). Residues T245, I247, and T250 each contribute to the K(+) site. Mg(2+) is bound at residue T251. K448 is a binding site for (6S)-5-formyl-5,6,7,8-tetrahydrofolate.

This sequence belongs to the TRAFAC class TrmE-Era-EngA-EngB-Septin-like GTPase superfamily. TrmE GTPase family. As to quaternary structure, homodimer. Heterotetramer of two MnmE and two MnmG subunits. K(+) serves as cofactor.

Its subcellular location is the cytoplasm. Its function is as follows. Exhibits a very high intrinsic GTPase hydrolysis rate. Involved in the addition of a carboxymethylaminomethyl (cmnm) group at the wobble position (U34) of certain tRNAs, forming tRNA-cmnm(5)s(2)U34. The sequence is that of tRNA modification GTPase MnmE from Neisseria meningitidis serogroup B (strain ATCC BAA-335 / MC58).